A 411-amino-acid chain; its full sequence is tRNA (uracil(54)-C(5))-methyltransferase (411 aa).

[4Fe-4S] cluster contacts are provided by Cys62, Cys68, Cys71, and Cys138. Residues Gln254, Tyr280, Thr285, 301-302 (DS), Asp328, and Asp342 contribute to the S-adenosyl-L-methionine site. Cys369 acts as the Nucleophile in catalysis. The active-site Proton acceptor is the Glu402.

Belongs to the class I-like SAM-binding methyltransferase superfamily. RNA M5U methyltransferase family.

It carries out the reaction uridine(54) in tRNA + S-adenosyl-L-methionine = 5-methyluridine(54) in tRNA + S-adenosyl-L-homocysteine + H(+). Functionally, catalyzes the formation of 5-methyl-uridine at position 54 (m5U54) in tRNA. The chain is tRNA (uracil(54)-C(5))-methyltransferase from Pyrococcus furiosus (strain ATCC 43587 / DSM 3638 / JCM 8422 / Vc1).